Reading from the N-terminus, the 368-residue chain is 3-dehydroquinate synthase (368 aa).

Residues 112-116 (GVIGD), 136-137 (TT), K149, K158, and 176-179 (TLIT) each bind NAD(+). E191, H256, and H273 together coordinate Zn(2+).

Belongs to the sugar phosphate cyclases superfamily. Dehydroquinate synthase family. It depends on Co(2+) as a cofactor. Zn(2+) is required as a cofactor. Requires NAD(+) as cofactor.

The protein localises to the cytoplasm. The enzyme catalyses 7-phospho-2-dehydro-3-deoxy-D-arabino-heptonate = 3-dehydroquinate + phosphate. It participates in metabolic intermediate biosynthesis; chorismate biosynthesis; chorismate from D-erythrose 4-phosphate and phosphoenolpyruvate: step 2/7. Catalyzes the conversion of 3-deoxy-D-arabino-heptulosonate 7-phosphate (DAHP) to dehydroquinate (DHQ). This chain is 3-dehydroquinate synthase, found in Prochlorococcus marinus (strain NATL2A).